Here is a 304-residue protein sequence, read N- to C-terminus: Iron(III) enterobactin esterase (304 aa).

Residues 1–25 (MRTSLLVAALGLALAAALPGGAPLA) form the signal peptide. Active-site charge relay system residues include Ser182, Glu242, and His283.

Belongs to the esterase D family. As to quaternary structure, monomer.

It localises to the periplasm. The enzyme catalyses Fe(III)-enterobactin + 3 H2O + H(+) = Fe(III)-[N-(2,3-dihydroxybenzoyl)-L-serine] + 2 N-(2,3-dihydroxybenzoyl)-L-serine. It catalyses the reaction Fe(III)-enterobactin + H2O = Fe(III)-[N-(2,3-dihydroxybenzoyl)-L-serine]3 + H(+). It carries out the reaction Fe(III)-[N-(2,3-dihydroxybenzoyl)-L-serine]3 + H2O + H(+) = Fe(III)-[N-(2,3-dihydroxybenzoyl)-L-serine]2 + N-(2,3-dihydroxybenzoyl)-L-serine. The catalysed reaction is Fe(III)-[N-(2,3-dihydroxybenzoyl)-L-serine]2 + H2O + H(+) = Fe(III)-[N-(2,3-dihydroxybenzoyl)-L-serine] + N-(2,3-dihydroxybenzoyl)-L-serine. In terms of biological role, catalyzes the hydrolysis of ferric enterobactin (Fe-Ent). Hydrolyzes Fe-Ent into three molecules of 2,3-dihydroxybenzoylserine (DHBS) still complexed with ferric iron. Iron reduction is necessary to obtain complete release of the metal from DHBS. It can hydrolyze salmochelin S4 (diglucosyl-C-Ent) but is not involved in iron acquisition by this siderophore. The polypeptide is Iron(III) enterobactin esterase (Pseudomonas aeruginosa (strain ATCC 15692 / DSM 22644 / CIP 104116 / JCM 14847 / LMG 12228 / 1C / PRS 101 / PAO1)).